The primary structure comprises 289 residues: G1/S-specific cyclin-D2 (289 aa).

The Cyclin N-terminal domain maps to 26 to 151 (VLQNLLTIEE…VVLGKLKWNL (126 aa)). Positions 264–289 (DQGDGSKSEDELDQASTPTDVRDIDL) are disordered. At Ser271 the chain carries Phosphoserine. Position 280 is a phosphothreonine (Thr280).

It belongs to the cyclin family. Cyclin D subfamily. As to quaternary structure, interacts with either CDK4 or CDK6 protein kinase to form a serine/threonine kinase holoenzyme complex. The cyclin subunit imparts substrate specificity to the complex. Post-translationally, phosphorylation at Thr-280 by MAP kinases is required for ubiquitination and degradation by the DCX(AMBRA1) complex. In terms of processing, ubiquitinated by the DCX(AMBRA1) complex during the transition from G1 to S cell phase, leading to its degradation: ubiquitination is dependent on Thr-280 phosphorylation. The DCX(AMBRA1) complex represents the major regulator of CCND2 stability during the G1/S transition. Polyubiquitinated by the SCF(FBXL2) complex, leading to proteasomal degradation.

The protein localises to the nucleus. It is found in the cytoplasm. The protein resides in the nucleus membrane. Regulatory component of the cyclin D2-CDK4 (DC) complex that phosphorylates and inhibits members of the retinoblastoma (RB) protein family including RB1 and regulates the cell-cycle during G(1)/S transition. Phosphorylation of RB1 allows dissociation of the transcription factor E2F from the RB/E2F complex and the subsequent transcription of E2F target genes which are responsible for the progression through the G(1) phase. Hypophosphorylates RB1 in early G(1) phase. Cyclin D-CDK4 complexes are major integrators of various mitogenenic and antimitogenic signals. The chain is G1/S-specific cyclin-D2 (CCND2) from Bos taurus (Bovine).